Reading from the N-terminus, the 100-residue chain is Small ribosomal subunit protein uS14 (100 aa).

It belongs to the universal ribosomal protein uS14 family. In terms of assembly, part of the 30S ribosomal subunit. Contacts proteins S3 and S10.

Binds 16S rRNA, required for the assembly of 30S particles and may also be responsible for determining the conformation of the 16S rRNA at the A site. This chain is Small ribosomal subunit protein uS14, found in Prochlorococcus marinus (strain NATL2A).